A 258-amino-acid polypeptide reads, in one-letter code: Ribosomal RNA small subunit methyltransferase J (258 aa).

S-adenosyl-L-methionine contacts are provided by residues 123–124 (ER) and aspartate 177. The disordered stretch occupies residues 232–258 (IDGPKPSHSLEGKSSRYDIYPKKALKA). The span at 239–252 (HSLEGKSSRYDIYP) shows a compositional bias: basic and acidic residues.

Belongs to the methyltransferase superfamily. RsmJ family.

It localises to the cytoplasm. It catalyses the reaction guanosine(1516) in 16S rRNA + S-adenosyl-L-methionine = N(2)-methylguanosine(1516) in 16S rRNA + S-adenosyl-L-homocysteine + H(+). Specifically methylates the guanosine in position 1516 of 16S rRNA. This Pseudomonas putida (strain GB-1) protein is Ribosomal RNA small subunit methyltransferase J.